The sequence spans 126 residues: 13 kDa ribonucleoprotein-associated protein (126 aa).

It belongs to the eukaryotic ribosomal protein eL8 family. Binds to the C'/D and B/C motifs in U3 snoRNA. Component of the U4/U6-U5 tri-snRNP complex composed of the U4, U6 and U5 snRNAs and at least PRP3, PRP4, PRP6, PRP8, PRP18, PRP31, PRP38, SNU13, SNU23, SNU66, SNU114, SPP381, SMB1, SMD1, SMD2, SMD3, SMX2, SMX3, LSM2, LSM3, LSM4, LSM5, LSM6, LSM7, LSM8, BRR2 and DIB1. Binds to the 5'-stem-loop of U4 snRNA. Component of the ribosomal small subunit (SSU) processome composed of at least 40 protein subunits and snoRNA U3.

Its subcellular location is the nucleus. It localises to the nucleolus. In terms of biological role, common component of the spliceosome and rRNA processing machinery. In association with the spliceosomal U4/U6.U5 tri-snRNP particle, required for splicing of pre-mRNA. In association with box C/D snoRNPs, required for processing of pre-ribosomal RNA (rRNA) and site-specific 2'-O-methylation of substrate RNAs. Essential for the accumulation and stability of U4 snRNA, U6 snRNA, and box C/D snoRNAs. This chain is 13 kDa ribonucleoprotein-associated protein (SNU13), found in Saccharomyces cerevisiae (strain ATCC 204508 / S288c) (Baker's yeast).